Consider the following 392-residue polypeptide: ATP phosphoribosyltransferase regulatory subunit (392 aa).

The protein belongs to the class-II aminoacyl-tRNA synthetase family. HisZ subfamily. As to quaternary structure, heteromultimer composed of HisG and HisZ subunits.

It is found in the cytoplasm. It participates in amino-acid biosynthesis; L-histidine biosynthesis; L-histidine from 5-phospho-alpha-D-ribose 1-diphosphate: step 1/9. Functionally, required for the first step of histidine biosynthesis. May allow the feedback regulation of ATP phosphoribosyltransferase activity by histidine. The sequence is that of ATP phosphoribosyltransferase regulatory subunit from Marinomonas sp. (strain MWYL1).